We begin with the raw amino-acid sequence, 220 residues long: Pyrrolidone-carboxylate peptidase 1 (220 aa).

Residues Glu80, Cys143, and His172 contribute to the active site.

The protein belongs to the peptidase C15 family. In terms of assembly, homotetramer.

Its subcellular location is the cytoplasm. The enzyme catalyses Release of an N-terminal pyroglutamyl group from a polypeptide, the second amino acid generally not being Pro.. Its function is as follows. Removes 5-oxoproline from various penultimate amino acid residues except L-proline. The chain is Pyrrolidone-carboxylate peptidase 1 from Photorhabdus laumondii subsp. laumondii (strain DSM 15139 / CIP 105565 / TT01) (Photorhabdus luminescens subsp. laumondii).